We begin with the raw amino-acid sequence, 488 residues long: Aspartyl/glutamyl-tRNA(Asn/Gln) amidotransferase subunit B (488 aa).

Belongs to the GatB/GatE family. GatB subfamily. Heterotrimer of A, B and C subunits.

It catalyses the reaction L-glutamyl-tRNA(Gln) + L-glutamine + ATP + H2O = L-glutaminyl-tRNA(Gln) + L-glutamate + ADP + phosphate + H(+). The catalysed reaction is L-aspartyl-tRNA(Asn) + L-glutamine + ATP + H2O = L-asparaginyl-tRNA(Asn) + L-glutamate + ADP + phosphate + 2 H(+). Its function is as follows. Allows the formation of correctly charged Asn-tRNA(Asn) or Gln-tRNA(Gln) through the transamidation of misacylated Asp-tRNA(Asn) or Glu-tRNA(Gln) in organisms which lack either or both of asparaginyl-tRNA or glutaminyl-tRNA synthetases. The reaction takes place in the presence of glutamine and ATP through an activated phospho-Asp-tRNA(Asn) or phospho-Glu-tRNA(Gln). This is Aspartyl/glutamyl-tRNA(Asn/Gln) amidotransferase subunit B from Chlamydia trachomatis serovar A (strain ATCC VR-571B / DSM 19440 / HAR-13).